The following is an 86-amino-acid chain: Large ribosomal subunit protein uL23 (86 aa).

It belongs to the universal ribosomal protein uL23 family. As to quaternary structure, part of the 50S ribosomal subunit. Contacts protein L29.

Binds to 23S rRNA. One of the proteins that surrounds the polypeptide exit tunnel on the outside of the ribosome. The polypeptide is Large ribosomal subunit protein uL23 (Pyrococcus horikoshii (strain ATCC 700860 / DSM 12428 / JCM 9974 / NBRC 100139 / OT-3)).